The primary structure comprises 267 residues: NADP-dependent mannitol dehydrogenase (267 aa).

The NADP(+) site is built by Asn108 and Lys141. Ser160 acts as the Proton donor in catalysis. Positions 175, 179, 207, and 209 each coordinate NADP(+). Tyr175 functions as the Proton acceptor in the catalytic mechanism. Lys179 functions as the Lowers pKa of active site Tyr in the catalytic mechanism.

The protein belongs to the short-chain dehydrogenases/reductases (SDR) family. As to quaternary structure, exists as monomer, dimer and tetramer.

The enzyme catalyses D-mannitol + NADP(+) = D-fructose + NADPH + H(+). Interconverts D-mannitol and D-fructose. Not active with fructose 6-phosphate or NADH. In Davidiella tassiana (Mycosphaerella tassiana), this protein is NADP-dependent mannitol dehydrogenase.